The primary structure comprises 257 residues: Fimbrial assembly protein, serogroup E1 (257 aa).

This chain is Fimbrial assembly protein, serogroup E1 (fimB), found in Dichelobacter nodosus (Bacteroides nodosus).